A 218-amino-acid chain; its full sequence is Small ribosomal subunit protein uS5 (218 aa).

A compositionally biased stretch (polar residues) spans 1–10 (MTQATNQTPG). The tract at residues 1-63 (MTQATNQTPG…GRDERDSEWQ (63 aa)) is disordered. Residues 11–25 (QDVPGAADVPAAAEG) are compositionally biased toward low complexity. The span at 31–63 (GERRGGGGGRGGDRRGRGDRRGRGRDERDSEWQ) shows a compositional bias: basic and acidic residues. Positions 62 to 125 (WQERVIQIRR…ADGKKHLVKV (64 aa)) constitute an S5 DRBM domain.

It belongs to the universal ribosomal protein uS5 family. In terms of assembly, part of the 30S ribosomal subunit. Contacts proteins S4 and S8.

Its function is as follows. With S4 and S12 plays an important role in translational accuracy. Functionally, located at the back of the 30S subunit body where it stabilizes the conformation of the head with respect to the body. The protein is Small ribosomal subunit protein uS5 of Synechococcus sp. (strain RCC307).